The primary structure comprises 314 residues: Target of rapamycin complex subunit wat1 (314 aa).

WD repeat units follow at residues 1–35 (MSVQYPPQHSVLLVSSGYDHTIRFWEALSGICSRT), 38–76 (HADSQVNRLCISPDKKFLAAAGNPHVRLYDINTSSQMPL), 81–120 (GHTNNVTAIAFHCDGKWLATSSEDGTVKVWDMRAPSVQRN), 122–161 (DHKSPVNDLLIHPNQGELLSCDQSGRVRAWDLGENSCTHE), 165–204 (EEDVPMSSITVGSDGSMLIAGNNKGNCYVWRMLNHQGASL), 213–252 (AHQRYITRCVLSPDVKHLATCSADATVNIWSTEDMSFMLE), and 257–296 (GHQRWVWDCAFSADSTYLVTASSDHVARLWELSSGETIRQ). Ser-141 is modified (phosphoserine).

This sequence belongs to the WD repeat LST8 family. In terms of assembly, the target of rapamycin complex 1 (TORC1) is composed of at least mip1, pop3/wat1, tco89, toc1 and tor2. The target of rapamycin complex 2 (TORC2) is composed of at least bit61, pop3/wat1, sin1, ste20 and tor1. Interacts with prp2.

The protein resides in the cytoplasm. It localises to the nucleus. In terms of biological role, component of both TORC1 and TORC2, which regulate multiple cellular processes to control cell growth in response to environmental signals. Nutrient limitation and environmental stress signals cause inactivation of TORC1. Active TORC1 positively controls cell growth and ribosome biogenesis by regulating ribosomal protein gene expression. TORC1 negatively controls G1 cell-cycle arrest, sexual development and amino acid uptake. Represses mating, meiosis and sporulation efficiency by interfering with the functions of the transcription factor ste11 and the meiosis-promoting RNA-binding protein mei2. TORC2 is required for cell survival under various stress conditions. TORC2 positively controls G1 cell-cycle arrest, sexual development and amino acid uptake. Positively regulates amino acid uptake through the control of expression of amino acid permeases. May play a role in mRNA maturation as a coupling protein between splicing and synthesis and/or stabilization. The polypeptide is Target of rapamycin complex subunit wat1 (Schizosaccharomyces pombe (strain 972 / ATCC 24843) (Fission yeast)).